A 732-amino-acid chain; its full sequence is MSKMKMLPVQLSLNSLNPGIWSDVLWRCPPAPSSQLAELKTQLPPSLPSDPRLWSREDVLVFLRFCVREFDLPKLDFDLFQMNGKALCLLTRADFGHRCPGAGDVLHNVLQMLIIESHMMQWHLPNSPVTPTSRYPLSPHSHPPTPTWPPLNAPPENSPFHSSAHSLAGHHFMAPNSVTLSPPPSVDSQASSPPQAPYQNGGATGAAPGSAGGSAPAAGGATNTSNPTSSSASSTGSNGSQPNIMPMKGISSASSNHSDSEEEYSETSGGVSKMPPAPLSYSTASPPGTPILKDIKPNWTQQLTNSFVNSWSQQQQQQQQQQAAAVAAVAAQAQQHQLQQQQQQQQLPQKLTLDNTAGPVVTPAGGSISAPTTPSYMYKAKREFFPENSEPNTNGRLLWDFLQQLLNDRNQKYSDLIAWKCRDTGVFKIVDPAGLAKLWGIQKNHLSMNYDKMSRALRYYYRVNILRKVQGERHCYQFLRNPTELKNIKNISLLRQSTPANGNGGSPSMPQGSSQAPGSPAGQNWNPQQQSQQQQQSPQRPASRNGPMSLPAVAAVAAAAAAAYGPPPTSPLFMHAINGAFHYLSAAAAGPPPNSPALNTPSAVGGPDKFQFHPLKLENGSGSGSESAGEDLKPTDLSVSSKSTATSNEDCYPLIRNADGLTTIKLIRYNEHQVAASPAGQSPKHDDQQAGASNASSSPRPMDQASEQAQPVPMESDCNGGESEDSFRHMQQ.

The PNT domain maps to 33 to 117 (SSQLAELKTQ…NVLQMLIIES (85 aa)). The tract at residues 133 to 295 (SRYPLSPHSH…PPGTPILKDI (163 aa)) is disordered. The segment covering 141-157 (SHPPTPTWPPLNAPPEN) has biased composition (pro residues). Residues 176-193 (NSVTLSPPPSVDSQASSP) are compositionally biased toward polar residues. Positions 205 to 240 (GAAPGSAGGSAPAAGGATNTSNPTSSSASSTGSNGS) are enriched in low complexity. Residues 396–479 (RLLWDFLQQL…QGERHCYQFL (84 aa)) constitute a DNA-binding region (ETS). 3 disordered regions span residues 496–548 (QSTP…NGPM), 590–647 (GPPP…TATS), and 674–732 (VAAS…HMQQ). Residues 506–539 (SPSMPQGSSQAPGSPAGQNWNPQQQSQQQQQSPQ) show a composition bias toward low complexity. Ser543 is modified (phosphoserine). Positions 637-647 (LSVSSKSTATS) are enriched in polar residues. 3 positions are modified to phosphoserine: Ser677, Ser682, and Ser696. The span at 690 to 709 (AGASNASSSPRPMDQASEQA) shows a compositional bias: polar residues.

The protein belongs to the ETS family. Post-translationally, phosphorylated in response to MAPK signaling. May be phosphorylated by rl. As to expression, expressed in R7 and cone cells of the eye.

It is found in the nucleus. Functionally, ets-related protein that functions as a negative regulator of photoreceptor development acting antagonistically to pnt and the proneural signal mediated by RAS. It acts upstream of SINA to inhibit R7 development. The sequence is that of Ets DNA-binding protein pokkuri (aop) from Drosophila melanogaster (Fruit fly).